A 213-amino-acid polypeptide reads, in one-letter code: Ribosomal RNA small subunit methyltransferase G (213 aa).

S-adenosyl-L-methionine contacts are provided by residues Gly-77, Phe-82, Ile-130–Glu-131, and Arg-146.

The protein belongs to the methyltransferase superfamily. RNA methyltransferase RsmG family.

It is found in the cytoplasm. It carries out the reaction guanosine(527) in 16S rRNA + S-adenosyl-L-methionine = N(7)-methylguanosine(527) in 16S rRNA + S-adenosyl-L-homocysteine. Specifically methylates the N7 position of guanine in position 527 of 16S rRNA. The chain is Ribosomal RNA small subunit methyltransferase G from Bartonella tribocorum (strain CIP 105476 / IBS 506).